The chain runs to 163 residues: HTH-type transcriptional regulator IscR (163 aa).

The region spanning 2–131 (RLTSKGRYAV…NNITLGELVN (130 aa)) is the HTH rrf2-type domain. A DNA-binding region (H-T-H motif) is located at residues 28–51 (LADISERQGISLSYLEQLFSRLRK). [2Fe-2S] cluster-binding residues include Cys-92, Cys-98, and Cys-104.

The cofactor is [2Fe-2S] cluster.

Its function is as follows. Regulates the transcription of several operons and genes involved in the biogenesis of Fe-S clusters and Fe-S-containing proteins. The protein is HTH-type transcriptional regulator IscR of Klebsiella pneumoniae subsp. pneumoniae (strain ATCC 700721 / MGH 78578).